Consider the following 367-residue polypeptide: Type II methyltransferase M.CviJI (367 aa).

Residues F3–D367 enclose the SAM-dependent MTase C5-type domain. Residue C73 is part of the active site.

The protein belongs to the class I-like SAM-binding methyltransferase superfamily. C5-methyltransferase family.

It carries out the reaction a 2'-deoxycytidine in DNA + S-adenosyl-L-methionine = a 5-methyl-2'-deoxycytidine in DNA + S-adenosyl-L-homocysteine + H(+). In terms of biological role, a methylase that recognizes the double-stranded sequence 5'-RGCY-3', methylates C-3 on both strands, and protects the DNA from cleavage by the CviJI endonuclease. This is Type II methyltransferase M.CviJI from Chlorella (PBCV-IL3A).